Reading from the N-terminus, the 196-residue chain is Probable calcium-binding protein CML32 (196 aa).

3 consecutive EF-hand domains span residues 30–65 (LNAV…LGLV), 121–156 (DEEE…LGLP), and 159–194 (GSLA…ITVW). Residues D43, N45, D47, E49, E54, D134, D136, D138, E145, D172, N174, D176, R178, and E183 each contribute to the Ca(2+) site.

In terms of biological role, potential calcium sensor. The polypeptide is Probable calcium-binding protein CML32 (CML32) (Oryza sativa subsp. japonica (Rice)).